A 479-amino-acid polypeptide reads, in one-letter code: Endoglucanase 20 (479 aa).

The signal sequence occupies residues 1–21; it reads MGKLLVLMLVGMFLAFESLEA. N29 carries an N-linked (GlcNAc...) asparagine glycan. D76 functions as the Nucleophile in the catalytic mechanism. H398 is a catalytic residue. N442 is a glycosylation site (N-linked (GlcNAc...) asparagine). Active-site residues include D449 and E458.

Belongs to the glycosyl hydrolase 9 (cellulase E) family.

It localises to the secreted. The catalysed reaction is Endohydrolysis of (1-&gt;4)-beta-D-glucosidic linkages in cellulose, lichenin and cereal beta-D-glucans.. This is Endoglucanase 20 from Arabidopsis thaliana (Mouse-ear cress).